The sequence spans 139 residues: Protein shisa-5 (139 aa).

A helical transmembrane segment spans residues 3–23 (FGTLVAIGVIVFAVVVITIIL).

Belongs to the shisa family.

The protein resides in the endoplasmic reticulum membrane. Its subcellular location is the nucleus membrane. In terms of biological role, can induce apoptosis in a caspase-dependent manner and plays a role in p53/TP53-dependent apoptosis. This is Protein shisa-5 (Shisa5) from Gallus gallus (Chicken).